A 503-amino-acid polypeptide reads, in one-letter code: Activin receptor type-1-like (503 aa).

The signal sequence occupies residues 1–21; sequence MTLGSPRRGLLMLLMALVTQG. Over 22–118 the chain is Extracellular; sequence DPVKPSRGPL…PSEQPGTDGQ (97 aa). Intrachain disulfides connect Cys-34–Cys-51, Cys-36–Cys-41, and Cys-46–Cys-69. The interval 73–76 is mediates specificity for BMP ligand; sequence HREL. Cystine bridges form between Cys-77/Cys-89 and Cys-90/Cys-95. Asn-98 carries N-linked (GlcNAc...) asparagine glycosylation. Residues 119 to 141 traverse the membrane as a helical segment; the sequence is LALILGPVLALLALVALGVLGLW. At 142 to 503 the chain is on the cytoplasmic side; the sequence is HVRRRQEKQR…NSPEKPKVIQ (362 aa). Phosphoserine occurs at positions 155, 160, and 161. One can recognise a GS domain in the interval 172-201; sequence SMLGDLLDSDCTTGSGSGLPFLVQRTVARQ. Residues 202-492 form the Protein kinase domain; it reads VALVECVGKG…LRIKKTLQKI (291 aa). Residues 208 to 216 and Lys-229 each bind ATP; that span reads VGKGRYGEV. Residue Asp-330 is the Proton acceptor of the active site.

Belongs to the protein kinase superfamily. TKL Ser/Thr protein kinase family. TGFB receptor subfamily. As to quaternary structure, interacts with TSC22D1/TSC-22. Mg(2+) is required as a cofactor. Mn(2+) serves as cofactor.

It localises to the cell membrane. It carries out the reaction L-threonyl-[receptor-protein] + ATP = O-phospho-L-threonyl-[receptor-protein] + ADP + H(+). The catalysed reaction is L-seryl-[receptor-protein] + ATP = O-phospho-L-seryl-[receptor-protein] + ADP + H(+). Functionally, type I receptor for TGF-beta family ligands BMP9/GDF2 and BMP10 and important regulator of normal blood vessel development. On ligand binding, forms a receptor complex consisting of two type II and two type I transmembrane serine/threonine kinases. Type II receptors phosphorylate and activate type I receptors which autophosphorylate, then bind and activate SMAD transcriptional regulators. May bind activin as well. The sequence is that of Activin receptor type-1-like (ACVRL1) from Pongo abelii (Sumatran orangutan).